The chain runs to 872 residues: MSSESSAEKGPPPSPAENVQPGVPPAAEEPGMISVDIAGLFYQFSKTFILIFPVYVLGYFGLSFSWLLIALVLLLWWRRNKGNKNSRLYRALAFLENEEKSVKHHIASTDLPAWVHFPDIERAEWLNKTVKHMWPYICQFIEKLFRETIEPAVRGANAHLSTFNFTKIDMGSQPLRINGVKVYTENVDKRQIILDLQISFVGETEIDLEVKRYFCRAGVKSIQLHGTMRVILEPLIGDVPIVGALSIFFLRKPLLEINWTGLTNMLDMPGLNGLSDTIILDIISNYLVLPNRITVPLVSDVQIAQLRFPIPKGVLRIHFLEAQDLMWKDTYMKGLVKGKSDPYGVVRLGNQVFQSKVIKENLNPKWNEVYEALVHEHPGQELEIELFDEDTDKDDFLGSLLIDLVEVEKERVVDEWFSLDEATSGKLHLKLEWLTPNSTTDNLDQVLKSIKADKDQANDGLSSALLILYLDSARSLPNNPLEINHDGMKKAAVEKAKKAGKKIGSSPNPYVLFSVGHAVQESKVKYKTAEPLWEQTFTFFVHNPKRQDLEVEVKDENHQSSMGNLKIPLSQILASEDLTMNQRFHLNNSGPNTSLKMKIALRILHVDKPVRSPDEQHTSQVKRPSIFKGKQPPTPQMPSPSPAVAHKPPPTPKLETNKKPENGNKGTPPSASPKSPTELHQSSSSLSGSSFTYSPSHLPAKEPTPSIASDISLPVATQELRERLRQLQNGTTLGQSPLGQIQLTIRHSSQRNKLMVVVHSCRNLIAFSETGSDPYVRIYLLPDKRRSGRRKTHVYKKTLNPIYDQTFEFSVSLPELQRRTLDIAVKHSGGFLSRDKGLLGKLLLELNTEDAAKGWTQWYDLTEDGTRPAVSS.

The tract at residues 1–25 (MSSESSAEKGPPPSPAENVQPGVPP) is disordered. The Cytoplasmic segment spans residues 1 to 31 (MSSESSAEKGPPPSPAENVQPGVPPAAEEPG). A helical transmembrane segment spans residues 32–52 (MISVDIAGLFYQFSKTFILIF). Residues 53–55 (PVY) are Lumenal-facing. The chain crosses the membrane as a helical span at residues 56–76 (VLGYFGLSFSWLLIALVLLLW). The Cytoplasmic portion of the chain corresponds to 77-872 (WRRNKGNKNS…EDGTRPAVSS (796 aa)). An SMP-LTD domain is found at 119–298 (DIERAEWLNK…LPNRITVPLV (180 aa)). 2 C2 domains span residues 297–417 (LVSD…DEWF) and 442–588 (NLDQ…HLNN). Ca(2+)-binding residues include Lys328, Asp329, Asp341, Asp388, Glu389, Asp390, Asp392, Asp394, and Asp395. Residues 608–617 (KPVRSPDEQH) are compositionally biased toward basic and acidic residues. Positions 608 to 711 (KPVRSPDEQH…EPTPSIASDI (104 aa)) are disordered. Over residues 632 to 652 (PPTPQMPSPSPAVAHKPPPTP) the composition is skewed to pro residues. Residues 664-681 (NKGTPPSASPKSPTELHQ) show a composition bias toward polar residues. The span at 682–696 (SSSSLSGSSFTYSPS) shows a compositional bias: low complexity. Residues 737 to 859 (PLGQIQLTIR…DAAKGWTQWY (123 aa)) form the C2 3 domain. A required for phosphatidylinositol 4,5-bisphosphate-dependent location at the cell membrane region spans residues 784–791 (KRRSGRRK).

This sequence belongs to the extended synaptotagmin family. As to quaternary structure, interacts with fgfr1 that has been activated by fgf1 binding. Interacts (via C2 domains) with the AP-2 complex (via an alpha subunit). Identified in a complex with the AP-2 complex and fgfr1.

The protein localises to the cell membrane. The protein resides in the endoplasmic reticulum membrane. Functionally, tethers the endoplasmic reticulum to the cell membrane and promotes the formation of appositions between the endoplasmic reticulum and the cell membrane. Binds glycerophospholipids in a barrel-like domain and may play a role in cellular lipid transport. Plays a role in the rapid internalization of fgfr1 that has been activated by fgf1 binding; this occurs most likely via the AP-2 complex. Required for normal fgf signaling and the activation of downstream signaling cascades via its role in the internalization of activated fgfr1. Required for normal embryonic development via its role in fgf signaling and the downstream regulation of t/xBRA expression. The sequence is that of Extended synaptotagmin-2-A (esyt2-a) from Xenopus laevis (African clawed frog).